Consider the following 182-residue polypeptide: ATP synthase subunit b, chloroplastic (182 aa).

A helical membrane pass occupies residues 31–53 (IINISVVLGVLVYFGKGVLSNLL).

It belongs to the ATPase B chain family. As to quaternary structure, F-type ATPases have 2 components, F(1) - the catalytic core - and F(0) - the membrane proton channel. F(1) has five subunits: alpha(3), beta(3), gamma(1), delta(1), epsilon(1). F(0) has four main subunits: a(1), b(1), b'(1) and c(10-14). The alpha and beta chains form an alternating ring which encloses part of the gamma chain. F(1) is attached to F(0) by a central stalk formed by the gamma and epsilon chains, while a peripheral stalk is formed by the delta, b and b' chains.

It is found in the plastid. It localises to the chloroplast thylakoid membrane. F(1)F(0) ATP synthase produces ATP from ADP in the presence of a proton or sodium gradient. F-type ATPases consist of two structural domains, F(1) containing the extramembraneous catalytic core and F(0) containing the membrane proton channel, linked together by a central stalk and a peripheral stalk. During catalysis, ATP synthesis in the catalytic domain of F(1) is coupled via a rotary mechanism of the central stalk subunits to proton translocation. Functionally, component of the F(0) channel, it forms part of the peripheral stalk, linking F(1) to F(0). The protein is ATP synthase subunit b, chloroplastic of Welwitschia mirabilis (Tree tumbo).